Consider the following 439-residue polypeptide: Cysteine--tRNA ligase (439 aa).

Cys26 is a binding site for Zn(2+). The short motif at 28–38 (PTVYNHVHIGN) is the 'HIGH' region element. The Zn(2+) site is built by Cys206, His231, and Glu235. A 'KMSKS' region motif is present at residues 263–267 (KMSKS). Lys266 contacts ATP.

This sequence belongs to the class-I aminoacyl-tRNA synthetase family. In terms of assembly, monomer. The cofactor is Zn(2+).

Its subcellular location is the cytoplasm. The catalysed reaction is tRNA(Cys) + L-cysteine + ATP = L-cysteinyl-tRNA(Cys) + AMP + diphosphate. The polypeptide is Cysteine--tRNA ligase (Malacoplasma penetrans (strain HF-2) (Mycoplasma penetrans)).